Consider the following 504-residue polypeptide: Maturase K (504 aa).

It belongs to the intron maturase 2 family. MatK subfamily.

It localises to the plastid. The protein resides in the chloroplast. Functionally, usually encoded in the trnK tRNA gene intron. Probably assists in splicing its own and other chloroplast group II introns. This Kokia drynarioides (Hawaiian tree cotton) protein is Maturase K.